A 1960-amino-acid polypeptide reads, in one-letter code: Zinc finger protein 638 (1960 aa).

The disordered stretch occupies residues 1–137 (MSRPRFNPRG…SPKVQSRYTK (137 aa)). Positions 19–31 (APNPPGMRPPGPF) are enriched in pro residues. Residues R47, R49, and R54 each carry the asymmetric dimethylarginine modification. Polar residues predominate over residues 60–75 (SYQNMGPQRMNVQVTQ). The segment covering 76 to 89 (HRTDPRLTKEKLDF) has biased composition (basic and acidic residues). Positions 117-137 (KQSSVTQVTEQSPKVQSRYTK) are enriched in polar residues. Phosphoserine is present on residues S128 and S288. Residue K291 forms a Glycyl lysine isopeptide (Lys-Gly) (interchain with G-Cter in SUMO2) linkage. Phosphoserine occurs at positions 298, 367, 381, and 418. The segment at 352–373 (KSVISSADAHGGPTESKKDYQS) is disordered. Disordered regions lie at residues 463-673 (NPEI…QSLS), 749-804 (PGKK…STVK), and 827-899 (KASI…KESE). Over residues 468 to 483 (PSRRNESNRKENETPR) the composition is skewed to basic and acidic residues. The tract at residues 470-573 (RRNESNRKEN…ERTSRKSVRS (104 aa)) is involved in localization to nuclear speckles. Over residues 484–556 (RRSHSPSPRH…SRNLLRRSPK (73 aa)) the composition is skewed to basic residues. S554 carries the post-translational modification Phosphoserine. Basic and acidic residues-rich tracts occupy residues 565–583 (RTSR…EDGG) and 591–602 (EVTKQKHTETVD). 2 positions are modified to phosphoserine: S606 and S615. Residues 618–628 (KPSAKSLSSVK) show a composition bias toward low complexity. S637 carries the phosphoserine modification. An RRM 1 domain is found at 676–751 (SILLVSELPE…KSVKVCVPGK (76 aa)). The span at 755–782 (QNKEMKKKPSDIKKSSASALKKETDASK) shows a compositional bias: basic and acidic residues. A Glycyl lysine isopeptide (Lys-Gly) (interchain with G-Cter in SUMO2) cross-link involves residue K775. The segment covering 783 to 802 (TMETVSSSSSAKSGQIKSST) has biased composition (low complexity). Composition is skewed to basic and acidic residues over residues 838 to 854 (KSLE…KDSN), 867 to 879 (ASSE…KSAE), and 888 to 899 (ATEKEPVNKESE). The RRM 2 domain maps to 902 to 976 (SVVFISNLPN…NQLSISMAPE (75 aa)). Basic and acidic residues predominate over residues 1082 to 1092 (SEVQRKNDLEL). Disordered regions lie at residues 1082–1151 (SEVQ…EEPK), 1396–1420 (TVVS…PKPV), 1442–1462 (TRSG…GVNR), 1484–1527 (TKQS…KSKE), and 1550–1583 (PSQA…KGKT). S1099 bears the Phosphoserine mark. Residues 1140–1151 (VHQEELGKEEPK) show a composition bias toward basic and acidic residues. Residues 1399-1409 (SSPKAKSTPSK) are compositionally biased toward low complexity. The residue at position 1400 (S1400) is a Phosphoserine. Residues 1442–1459 (TRSGLAESNSKSKPTQIG) show a composition bias toward polar residues. Composition is skewed to basic and acidic residues over residues 1484-1503 (TKQS…DDSN) and 1518-1527 (TTDRSSKSKE). Phosphoserine is present on residues S1635 and S1661. 2 disordered regions span residues 1763–1898 (EVGD…SDVP) and 1930–1960 (KSTR…RSSR). Residues 1772 to 1790 (NDSKVELARGKIEHHTDKK) are compositionally biased toward basic and acidic residues. A Glycyl lysine isopeptide (Lys-Gly) (interchain with G-Cter in SUMO2) cross-link involves residue K1804. The span at 1806–1818 (DSFSQVGPGSETV) shows a compositional bias: polar residues. Residues 1819-1831 (TQKDLKTMPERHL) show a composition bias toward basic and acidic residues. Residue S1864 is modified to Phosphoserine. Positions 1870 to 1885 (AELKDSEPDEKRRKTQ) are enriched in basic and acidic residues. The Matrin-type zinc-finger motif lies at 1876 to 1906 (EPDEKRRKTQDSSVGKSMTSDVPGDLDFLVP). The span at 1886 to 1895 (DSSVGKSMTS) shows a compositional bias: polar residues. A compositionally biased stretch (basic and acidic residues) spans 1936–1960 (QNTEKFMAKQRKEKEQNETEERSSR).

As to quaternary structure, interacts with FHL2. Interacts with CEBPA, CEBPD and CEBPG. Interacts with MPHOSPH8 and TASOR components of the HUSH complex; leading to recruitment of the HUSH complex. Interacts with SETDB1. Interacts with HDAC1. Interacts with HDAC4.

It localises to the nucleus speckle. In terms of biological role, transcription factor that binds to cytidine clusters in double-stranded DNA. Plays a key role in the silencing of unintegrated retroviral DNA: some part of the retroviral DNA formed immediately after infection remains unintegrated in the host genome and is transcriptionally repressed. Mediates transcriptional repression of unintegrated viral DNA by specifically binding to the cytidine clusters of retroviral DNA and mediating the recruitment of chromatin silencers, such as the HUSH complex, SETDB1 and the histone deacetylases HDAC1 and HDAC4. Acts as an early regulator of adipogenesis by acting as a transcription cofactor of CEBPs (CEBPA, CEBPD and/or CEBPG), controlling the expression of PPARG and probably of other proadipogenic genes, such as SREBF1. May also regulate alternative splicing of target genes during adipogenesis. In Mus musculus (Mouse), this protein is Zinc finger protein 638.